The sequence spans 267 residues: Apolipoprotein A-I (267 aa).

The signal sequence occupies residues 1-18; sequence MKAAVLTLAVLFLTGSQA. 2 tandem repeats follow at residues 68–89 and 90–111. The interval 68 to 267 is 10 X approximate tandem repeats; it reads LKLLDNWDSL…EEYAKKLSSQ (200 aa). Residue Met-110 is modified to Methionine sulfoxide. The stretch at 112–122 is one 3; half-length repeat; the sequence is KDLEEVKAKVQ. Tandem repeats lie at residues 123–144, 145–166, 167–188, 189–210, and 211–232. The stretch at 233–243 is one 9; half-length repeat; the sequence is PALEDLRQGLL. Repeat 10 spans residues 244 to 267; that stretch reads PVLESFKVSFLSALEEYAKKLSSQ.

This sequence belongs to the apolipoprotein A1/A4/E family. As to quaternary structure, homodimer. Interacts with APOA1BP and CLU. Component of a sperm activating protein complex (SPAP), consisting of APOA1, an immunoglobulin heavy chain, an immunoglobulin light chain and albumin. Interacts with NDRG1. Interacts with SCGB3A2. Interacts with NAXE and YJEFN3. Post-translationally, glycosylated. Palmitoylated. In terms of processing, phosphorylation sites are present in the extracellular medium.

The protein resides in the secreted. Its function is as follows. Participates in the reverse transport of cholesterol from tissues to the liver for excretion by promoting cholesterol efflux from tissues and by acting as a cofactor for the lecithin cholesterol acyltransferase (LCAT). As part of the SPAP complex, activates spermatozoa motility. This Cebus imitator (Panamanian white-faced capuchin) protein is Apolipoprotein A-I (APOA1).